A 285-amino-acid chain; its full sequence is Probable endonuclease 4 (285 aa).

The Zn(2+) site is built by His69, His109, Glu145, Asp179, His182, His216, Asp229, His231, and Glu261.

Belongs to the AP endonuclease 2 family. It depends on Zn(2+) as a cofactor.

The enzyme catalyses Endonucleolytic cleavage to 5'-phosphooligonucleotide end-products.. Endonuclease IV plays a role in DNA repair. It cleaves phosphodiester bonds at apurinic or apyrimidinic (AP) sites, generating a 3'-hydroxyl group and a 5'-terminal sugar phosphate. The sequence is that of Probable endonuclease 4 from Escherichia coli O81 (strain ED1a).